The chain runs to 91 residues: Acylphosphatase (91 aa).

The Acylphosphatase-like domain occupies 3 to 91; it reads CLRAIVKGKV…ANYSDFRIKH (89 aa). Active-site residues include Arg18 and Asn36.

It belongs to the acylphosphatase family.

It catalyses the reaction an acyl phosphate + H2O = a carboxylate + phosphate + H(+). The chain is Acylphosphatase (acyP) from Dehalococcoides mccartyi (strain ATCC BAA-2100 / JCM 16839 / KCTC 5957 / BAV1).